Consider the following 160-residue polypeptide: CXXC motif containing zinc binding protein (160 aa).

C33, C36, C67, and C70 together coordinate Zn(2+). S75 bears the Phosphoserine mark.

This sequence belongs to the UPF0587 family. As to quaternary structure, monomer.

This chain is CXXC motif containing zinc binding protein, found in Homo sapiens (Human).